A 364-amino-acid chain; its full sequence is DNA replication and repair protein RecF (364 aa).

23–30 (GPNGIGKS) is a binding site for ATP.

This sequence belongs to the RecF family.

The protein resides in the cytoplasm. The RecF protein is involved in DNA metabolism; it is required for DNA replication and normal SOS inducibility. RecF binds preferentially to single-stranded, linear DNA. It also seems to bind ATP. The polypeptide is DNA replication and repair protein RecF (Synechococcus sp. (strain CC9605)).